We begin with the raw amino-acid sequence, 263 residues long: MAPK-interacting and spindle-stabilizing protein (263 aa).

Positions 13–238 are disordered; the sequence is GSPAPFLPSG…LGKQQGHNTT (226 aa). 2 stretches are compositionally biased toward pro residues: residues 14–34 and 140–155; these read SPAP…PYPG and GLQP…PPGP. Over residues 156–165 the composition is skewed to low complexity; it reads SAASPGPGSL. Positions 176–189 are enriched in polar residues; that stretch reads PSDSSNPESTLEST. Residues 202–213 are compositionally biased toward basic residues; that stretch reads IKRRRSKKKSKR.

Belongs to the MISS family. Interacts with MAPK1. Post-translationally, phosphorylated in vitro by MAPK1.

It localises to the cytoplasm. It is found in the cytoskeleton. The protein localises to the spindle. Functionally, involved in the maintenance of the spindle integrity during the cytostatic factor (CSF) arrest of oocytes. This Mus musculus (Mouse) protein is MAPK-interacting and spindle-stabilizing protein (Mapk1ip1).